Here is an 84-residue protein sequence, read N- to C-terminus: Large ribosomal subunit protein bL27 (84 aa).

The segment at 1–22 is disordered; sequence MAHKKGASSTRNGRDSNAQRLG. A compositionally biased stretch (polar residues) spans 7-19; that stretch reads ASSTRNGRDSNAQ.

This sequence belongs to the bacterial ribosomal protein bL27 family.

This Streptomyces coelicolor (strain ATCC BAA-471 / A3(2) / M145) protein is Large ribosomal subunit protein bL27.